Reading from the N-terminus, the 360-residue chain is Membrane-bound lytic murein transglycosylase C (360 aa).

Positions 1–16 (MKKIFALALIAPLLIS) are cleaved as a signal peptide. The N-palmitoyl cysteine moiety is linked to residue C17. C17 is lipidated: S-diacylglycerol cysteine.

It belongs to the transglycosylase Slt family.

It is found in the cell outer membrane. It catalyses the reaction Exolytic cleavage of the (1-&gt;4)-beta-glycosidic linkage between N-acetylmuramic acid (MurNAc) and N-acetylglucosamine (GlcNAc) residues in peptidoglycan, from either the reducing or the non-reducing ends of the peptidoglycan chains, with concomitant formation of a 1,6-anhydrobond in the MurNAc residue.. Murein-degrading enzyme. May play a role in recycling of muropeptides during cell elongation and/or cell division. In Cronobacter sakazakii (strain ATCC BAA-894) (Enterobacter sakazakii), this protein is Membrane-bound lytic murein transglycosylase C.